The chain runs to 148 residues: MEFTLRQEALVNSSWEAFNQNLPLFSVLFYTFILEKAPIAKNMFSVLKDANEIPLANPSINAHTEMVFEMVRDAAAQLQTTGQVVLGDTTLGVVHTQKRVDGLHFMVVKEALLKTIKEAVGDKWSEELSNAWEIAYDGLAVAIMKEMS.

Positions 2–148 (EFTLRQEALV…LAVAIMKEMS (147 aa)) constitute a Globin domain. Nitrated tyrosine is present on Tyr30. Ser45 contributes to the heme b binding site. Ser45 is subject to Phosphoserine. An O2-binding site is contributed by His63. Heme b-binding residues include His95 and Lys98. Nitrated tyrosine is present on Tyr136.

It belongs to the plant globin family. As to quaternary structure, monomer. Post-translationally, nitrated in effective nodules and particularly in hypoxic conditions; this mechanism may play a protective role in the symbiosis by buffering toxic peroxynitrite NO(2)(-). Nitration level decrease during nodule senescence. Phosphorylation at Ser-45 disrupts the molecular environment of its porphyrin ring oxygen binding pocket, thus leading to a reduced oxygen consumption and to the delivery of oxygen O(2) to symbiosomes. As to expression, accumulates in root nodules after inoculation by bacteria of the genus Rhizobium. Expressed in mycorrhizal roots in the presence of the mycorrhizal fungus Glomus fasciculatum.

The protein localises to the cytoplasm. It is found in the cytosol. The protein resides in the nucleus. Leghemoglobin that reversibly binds oxygen O(2) through a pentacoordinated heme iron. In root nodules, facilitates the diffusion of oxygen to the bacteroids while preventing the bacterial nitrogenase from being inactivated by buffering dioxygen, nitric oxide and carbon monoxide, and promoting the formation of reactive oxygen species (ROS, e.g. H(2)O(2)). This role is essential for symbiotic nitrogen fixation (SNF). This Vicia faba (Broad bean) protein is Leghemoglobin 29.